A 301-amino-acid polypeptide reads, in one-letter code: Tyrosine recombinase XerC (301 aa).

The Core-binding (CB) domain occupies 1–89 (MGLDGLAAYL…SWRQYCVWLV (89 aa)). The region spanning 110–290 (RVPKALPQEW…DFDHIARLYD (181 aa)) is the Tyr recombinase domain. Catalysis depends on residues R151, K175, H242, R245, and H268. The active-site O-(3'-phospho-DNA)-tyrosine intermediate is Y277.

This sequence belongs to the 'phage' integrase family. XerC subfamily. Forms a cyclic heterotetrameric complex composed of two molecules of XerC and two molecules of XerD.

It localises to the cytoplasm. Functionally, site-specific tyrosine recombinase, which acts by catalyzing the cutting and rejoining of the recombining DNA molecules. The XerC-XerD complex is essential to convert dimers of the bacterial chromosome into monomers to permit their segregation at cell division. It also contributes to the segregational stability of plasmids. The protein is Tyrosine recombinase XerC of Neisseria meningitidis serogroup B (strain ATCC BAA-335 / MC58).